Here is a 638-residue protein sequence, read N- to C-terminus: Sodium- and chloride-dependent neutral and basic amino acid transporter B(0+) (638 aa).

Topologically, residues 1 to 44 (MDRLKCPNFFKCRQKEKVTASSENFHVGENDENQERGNWSKKSD) are cytoplasmic. 3 helical membrane-spanning segments follow: residues 45–65 (YLLS…FPYL), 72–92 (GAFL…LFFL), and 110–130 (ILPL…FVAI). At 131 to 230 (YYNVIIAYSL…RSSGMDETGV (100 aa)) the chain is on the extracellular side. 6 N-linked (GlcNAc...) asparagine glycosylation sites follow: Asn155, Asn163, Asn174, Asn185, Asn193, and Asn198. 2 helical membrane-spanning segments follow: residues 231–251 (VVWY…AALF) and 257–277 (SGKV…ILLI). Residue Asn298 is glycosylated (N-linked (GlcNAc...) asparagine). Helical transmembrane passes span 311-331 (AATQ…ALSS), 344-364 (IIVC…IFSI), 395-415 (LAQL…LLTL), 453-473 (ILFL…VHLI), 476-496 (FCAG…IIWI), 524-544 (CWFV…LVKF), and 559-579 (VALG…MAII). Over 580-638 (KIVQAEGNILQRIISCCRPASNWGPYLEKHRGERYRDMAEPAKETDHEIPTISGSTKPE) the chain is Cytoplasmic. Over residues 618–628 (AEPAKETDHEI) the composition is skewed to basic and acidic residues. The disordered stretch occupies residues 618–638 (AEPAKETDHEIPTISGSTKPE).

It belongs to the sodium:neurotransmitter symporter (SNF) (TC 2.A.22) family. SLC6A14 subfamily. In terms of tissue distribution, expressed in the distal region of the intestinal tract: cecum and colon.

It localises to the membrane. It is found in the apical cell membrane. The enzyme catalyses glycine(out) + chloride(out) + 2 Na(+)(out) = glycine(in) + chloride(in) + 2 Na(+)(in). It carries out the reaction L-leucine(out) + chloride(out) + 2 Na(+)(out) = L-leucine(in) + chloride(in) + 2 Na(+)(in). It catalyses the reaction L-glutamine(out) + chloride(out) + 2 Na(+)(out) = L-glutamine(in) + chloride(in) + 2 Na(+)(in). The catalysed reaction is L-arginine(out) + chloride(out) + 2 Na(+)(out) = L-arginine(in) + chloride(in) + 2 Na(+)(in). The enzyme catalyses (R)-carnitine(out) + chloride(out) + 2 Na(+)(out) = (R)-carnitine(in) + chloride(in) + 2 Na(+)(in). It carries out the reaction O-propanoyl-(R)-carnitine(out) + chloride(out) + 2 Na(+)(out) = O-propanoyl-(R)-carnitine(in) + chloride(in) + 2 Na(+)(in). It catalyses the reaction L-isoleucine(out) + chloride(out) + 2 Na(+)(out) = L-isoleucine(in) + chloride(in) + 2 Na(+)(in). The catalysed reaction is L-methionine(out) + chloride(out) + 2 Na(+)(out) = L-methionine(in) + chloride(in) + 2 Na(+)(in). The enzyme catalyses L-valine(out) + chloride(out) + 2 Na(+)(out) = L-valine(in) + chloride(in) + 2 Na(+)(in). It carries out the reaction L-alanine(out) + chloride(out) + 2 Na(+)(out) = L-alanine(in) + chloride(in) + 2 Na(+)(in). It catalyses the reaction L-serine(out) + chloride(out) + 2 Na(+)(out) = L-serine(in) + chloride(in) + 2 Na(+)(in). The catalysed reaction is L-cysteine(out) + chloride(out) + 2 Na(+)(out) = L-cysteine(in) + chloride(in) + 2 Na(+)(in). The enzyme catalyses L-asparagine(out) + chloride(out) + 2 Na(+)(out) = L-asparagine(in) + chloride(in) + 2 Na(+)(in). It carries out the reaction L-threonine(out) + chloride(out) + 2 Na(+)(out) = L-threonine(in) + chloride(in) + 2 Na(+)(in). It catalyses the reaction L-phenylalanine(out) + chloride(out) + 2 Na(+)(out) = L-phenylalanine(in) + chloride(in) + 2 Na(+)(in). The catalysed reaction is L-tryptophan(out) + chloride(out) + 2 Na(+)(out) = L-tryptophan(in) + chloride(in) + 2 Na(+)(in). The enzyme catalyses L-tyrosine(out) + chloride(out) + 2 Na(+)(out) = L-tyrosine(in) + chloride(in) + 2 Na(+)(in). It carries out the reaction L-histidine(out) + chloride(out) + 2 Na(+)(out) = L-histidine(in) + chloride(in) + 2 Na(+)(in). It catalyses the reaction L-lysine(out) + chloride(out) + 2 Na(+)(out) = L-lysine(in) + chloride(in) + 2 Na(+)(in). The catalysed reaction is O-butanoyl-(R)-carnitine(out) + chloride(out) + 2 Na(+)(out) = O-butanoyl-(R)-carnitine(in) + chloride(in) + 2 Na(+)(in). In terms of biological role, amino acid transporter that plays an important role in the absorption of amino acids in the intestinal tract. Mediates the uptake of a broad range of neutral and cationic amino acids (with the exception of proline) in a Na(+)/Cl(-)-dependent manner. Transports non-alpha-amino acids such as beta-alanine with low affinity, and has a higher affinity for dipolar and cationic amino acids such as leucine and lysine. Can also transport carnitine, butyrylcarnitine and propionylcarnitine coupled to the transmembrane gradients of Na(+) and Cl(-). The chain is Sodium- and chloride-dependent neutral and basic amino acid transporter B(0+) from Mus musculus (Mouse).